The sequence spans 318 residues: Methionyl-tRNA formyltransferase (318 aa).

112 to 115 (SILP) contacts (6S)-5,6,7,8-tetrahydrofolate.

This sequence belongs to the Fmt family.

The enzyme catalyses L-methionyl-tRNA(fMet) + (6R)-10-formyltetrahydrofolate = N-formyl-L-methionyl-tRNA(fMet) + (6S)-5,6,7,8-tetrahydrofolate + H(+). In terms of biological role, attaches a formyl group to the free amino group of methionyl-tRNA(fMet). The formyl group appears to play a dual role in the initiator identity of N-formylmethionyl-tRNA by promoting its recognition by IF2 and preventing the misappropriation of this tRNA by the elongation apparatus. This Shewanella sp. (strain W3-18-1) protein is Methionyl-tRNA formyltransferase.